A 224-amino-acid polypeptide reads, in one-letter code: Oxygen-evolving enhancer protein 3-1, chloroplastic (224 aa).

The transit peptide at M1–R44 directs the protein to the chloroplast. The N-terminal 31 residues, A45 to A75, are a transit peptide targeting the thylakoid. The residue at position 189 (T189) is a Phosphothreonine. Phosphotyrosine is present on Y209. T212 carries the post-translational modification Phosphothreonine.

Belongs to the PsbQ family. In terms of tissue distribution, expressed in green tissue, with high steady-state mRNA levels in leaves. Not expressed in roots.

The protein resides in the plastid. Its subcellular location is the chloroplast thylakoid membrane. In terms of biological role, required for photosystem II assembly/stability and photoautotrophic growth under low light conditions. This is Oxygen-evolving enhancer protein 3-1, chloroplastic (PSBQ1) from Arabidopsis thaliana (Mouse-ear cress).